Here is a 364-residue protein sequence, read N- to C-terminus: D-alanine--D-alanine ligase A (364 aa).

The ATP-grasp domain occupies 145–348 (KRLLRDAGLN…YTDLISRLIE (204 aa)). 175 to 230 (ESRLGLPLFVKPANQGSSVGVSKVANEAQYQQAVALAFEFDHKVVVEQGIKGREIE) provides a ligand contact to ATP. The Mg(2+) site is built by Asp-302, Glu-315, and Asn-317.

The protein belongs to the D-alanine--D-alanine ligase family. Requires Mg(2+) as cofactor. Mn(2+) is required as a cofactor.

It is found in the cytoplasm. The catalysed reaction is 2 D-alanine + ATP = D-alanyl-D-alanine + ADP + phosphate + H(+). Its pathway is cell wall biogenesis; peptidoglycan biosynthesis. In terms of biological role, cell wall formation. The polypeptide is D-alanine--D-alanine ligase A (ddlA) (Salmonella typhi).